Here is a 460-residue protein sequence, read N- to C-terminus: UDP-glycosyltransferase 74B1 (460 aa).

Residue H22 is the Proton acceptor of the active site. An an anthocyanidin-binding site is contributed by H22. D113 (charge relay) is an active-site residue. Residues T135, Q339, H354, W357, N358, S359, E362, D378, and Q379 each contribute to the UDP-alpha-D-glucose site.

This sequence belongs to the UDP-glycosyltransferase family. As to expression, expressed in the vasculature, the apical meristems of roots, shoots and inflorescence, and the junction of organ or branches.

It carries out the reaction (Z)-2-phenyl-1-thioacetohydroximate + UDP-alpha-D-glucose = (Z)-desulfoglucotropeolin + UDP. The catalysed reaction is a (Z)-omega-(methylsulfanyl)alkyl-thiohydroximate + UDP-alpha-D-glucose = an aliphatic (Z)-desulfo-glucosinolate + UDP. It catalyses the reaction (Z)-2-(indol-3-yl)-1-thioacetohydroximate + UDP-alpha-D-glucose = (Z)-indolylmethyl desulfoglucosinolate + UDP. Involved in the biosynthesis of glucosinolate. In in vitro assay, may use phenylacetothiohydroximate (PATH), but not phenylacetic acid (PAA), indole-3-acetic acid (IAA) or salicylic acid (SA) as substrate. Specific for the thiohydroximate functional group and does not glucosylate the carboxylate group or a hydroxyl group. This Arabidopsis thaliana (Mouse-ear cress) protein is UDP-glycosyltransferase 74B1 (UGT74B1).